A 339-amino-acid chain; its full sequence is 7,8-didemethyl-8-hydroxy-5-deazariboflavin synthase (339 aa).

The 246-residue stretch at 13-258 (ITYSKNIFIP…RDTDVSIQVP (246 aa)) folds into the Radical SAM core domain. The [4Fe-4S] cluster site is built by Cys-27, Cys-31, and Cys-34.

The protein belongs to the radical SAM superfamily. CofG family. Consists of two subunits, CofG and CofH. [4Fe-4S] cluster is required as a cofactor.

The enzyme catalyses 5-amino-5-(4-hydroxybenzyl)-6-(D-ribitylimino)-5,6-dihydrouracil + S-adenosyl-L-methionine = 7,8-didemethyl-8-hydroxy-5-deazariboflavin + 5'-deoxyadenosine + L-methionine + NH4(+) + H(+). Its pathway is cofactor biosynthesis; coenzyme F0 biosynthesis. In terms of biological role, catalyzes the radical-mediated synthesis of 7,8-didemethyl-8-hydroxy-5-deazariboflavin from 5-amino-5-(4-hydroxybenzyl)-6-(D-ribitylimino)-5,6-dihydrouracil. The sequence is that of 7,8-didemethyl-8-hydroxy-5-deazariboflavin synthase from Methanobrevibacter smithii (strain ATCC 35061 / DSM 861 / OCM 144 / PS).